Consider the following 135-residue polypeptide: MADNFNFELVSPERLLLSEQVIDVVIPASEGEMTVMAHHAPTMTTIKPGVVKVHSASGKKQDYVVFGGFADILPTGCTLLAESAIPVEDLNQDELTRRINAAKAELEDAEHHEHKSRLEHFIMELTHLSGSIQKD.

The protein belongs to the ATPase epsilon chain family. In terms of assembly, F-type ATPases have 2 components, CF(1) - the catalytic core - and CF(0) - the membrane proton channel. CF(1) has five subunits: alpha(3), beta(3), gamma(1), delta(1), epsilon(1). CF(0) has three main subunits: a, b and c.

It localises to the cell inner membrane. In terms of biological role, produces ATP from ADP in the presence of a proton gradient across the membrane. This Rhizobium rhizogenes (strain K84 / ATCC BAA-868) (Agrobacterium radiobacter) protein is ATP synthase epsilon chain.